A 222-amino-acid chain; its full sequence is MAEKPKLHYSNARGSMESIRWLLAAAGVELEEKFLESAEDLDKLRNDGSLLFQQVPMVEIDGMKLVQTRAILNYIASKYNLYGKDMKERALIDMYTEGIVDLTEMILLLLICQPEERDAKTALVKEKIKNRYFPAFEKVLKSHRQDYLVGNKLSWADIHLVELFYYVEELDSSLISSFPLLKALKTRISNLPTVKKFLQPGSQRKPPMDEKSLEEARKIFRF.

Alanine 2 is modified (N-acetylalanine). One can recognise a GST N-terminal domain in the interval 3-83 (EKPKLHYSNA…YIASKYNLYG (81 aa)). Residue lysine 4 is modified to N6-succinyllysine. Residues tyrosine 9, arginine 45, 54–55 (QV), and 67–68 (QT) each bind glutathione. The GST C-terminal domain maps to 85–208 (DMKERALIDM…QPGSQRKPPM (124 aa)).

This sequence belongs to the GST superfamily. Alpha family. Homodimer. As to expression, expression not detected.

The protein localises to the cytoplasm. The enzyme catalyses RX + glutathione = an S-substituted glutathione + a halide anion + H(+). The sequence is that of Glutathione S-transferase A5 (GSTA5) from Homo sapiens (Human).